A 428-amino-acid polypeptide reads, in one-letter code: C4-dicarboxylate transport protein 1 (428 aa).

The next 8 helical transmembrane spans lie at 5-27 (FYKI…GHFE), 42-64 (IQLI…IAGM), 77-99 (ALLY…GHIF), 150-167 (ILQI…LSAM), 188-210 (IVHV…TIGK), 225-247 (TFYL…LTGF), 314-336 (IFIS…LAVA), and 351-373 (FITL…VLIL).

The protein belongs to the dicarboxylate/amino acid:cation symporter (DAACS) (TC 2.A.23) family.

The protein localises to the cell inner membrane. Responsible for the transport of dicarboxylates such as succinate, fumarate, and malate from the periplasm across the membrane. The chain is C4-dicarboxylate transport protein 1 (dctA1) from Ralstonia nicotianae (strain ATCC BAA-1114 / GMI1000) (Ralstonia solanacearum).